Here is a 305-residue protein sequence, read N- to C-terminus: Virulence plasmid integrase pGP7-D (305 aa).

Residues 13–99 enclose the Core-binding (CB) domain; sequence LTFGEASEIW…CYISFTKFLY (87 aa). The Tyr recombinase domain maps to 127-303; it reads VKTVSISKKE…GNSSVANIPT (177 aa). Residues lysine 188 and arginine 257 contribute to the active site. Catalysis depends on tyrosine 289, which acts as the O-(3'-phospho-DNA)-tyrosine intermediate.

Belongs to the 'phage' integrase family.

The sequence is that of Virulence plasmid integrase pGP7-D from Chlamydia muridarum (strain MoPn / Nigg).